Reading from the N-terminus, the 119-residue chain is Large ribosomal subunit protein bL17 (119 aa).

Belongs to the bacterial ribosomal protein bL17 family. In terms of assembly, part of the 50S ribosomal subunit. Contacts protein L32.

In Mesoplasma florum (strain ATCC 33453 / NBRC 100688 / NCTC 11704 / L1) (Acholeplasma florum), this protein is Large ribosomal subunit protein bL17.